The sequence spans 315 residues: Transposase for insertion sequence element IS640 (315 aa).

The HTH IS21-type domain occupies 5–66 (EDFYMIKQMR…PFMDYIDMRL (62 aa)). In terms of domain architecture, Integrase catalytic spans 111–285 (FETQPGYQLQ…TPEQRSRWSR (175 aa)).

This sequence belongs to the transposase IS21/IS408/IS1162 family.

Its function is as follows. Involved in the transposition of the insertion sequence. This is Transposase for insertion sequence element IS640 (istA) from Shigella sonnei.